The following is a 122-amino-acid chain: Fluoride-specific ion channel FluC (122 aa).

A run of 4 helical transmembrane segments spans residues 5 to 25 (FLIG…SGII), 29 to 49 (FGIP…VGFL), 65 to 85 (FIIT…YESF), and 93 to 113 (FIKS…MIYF). 2 residues coordinate Na(+): G72 and T75.

Belongs to the fluoride channel Fluc/FEX (TC 1.A.43) family.

It is found in the cell membrane. The enzyme catalyses fluoride(in) = fluoride(out). Its activity is regulated as follows. Na(+) is not transported, but it plays an essential structural role and its presence is essential for fluoride channel function. Functionally, fluoride-specific ion channel. Important for reducing fluoride concentration in the cell, thus reducing its toxicity. This Methanococcus vannielii (strain ATCC 35089 / DSM 1224 / JCM 13029 / OCM 148 / SB) protein is Fluoride-specific ion channel FluC.